We begin with the raw amino-acid sequence, 348 residues long: Centromere protein N-B (348 aa).

The protein belongs to the CENP-N/CHL4 family.

The protein resides in the nucleus. It is found in the chromosome. Its subcellular location is the centromere. Its function is as follows. Probable component of a centromeric complex involved in assembly of kinetochore proteins, mitotic progression and chromosome segregation. The sequence is that of Centromere protein N-B (cenpn-b) from Xenopus laevis (African clawed frog).